A 462-amino-acid polypeptide reads, in one-letter code: Cysteine--tRNA ligase (462 aa).

Position 28 (Cys28) interacts with Zn(2+). The 'HIGH' region signature appears at 30–40 (ITVYDLCHIGH). Cys210, His235, and Glu239 together coordinate Zn(2+). The 'KMSKS' region motif lies at 267–271 (KMSKS). Lys270 contributes to the ATP binding site.

The protein belongs to the class-I aminoacyl-tRNA synthetase family. As to quaternary structure, monomer. Zn(2+) serves as cofactor.

The protein resides in the cytoplasm. The catalysed reaction is tRNA(Cys) + L-cysteine + ATP = L-cysteinyl-tRNA(Cys) + AMP + diphosphate. This is Cysteine--tRNA ligase from Erwinia tasmaniensis (strain DSM 17950 / CFBP 7177 / CIP 109463 / NCPPB 4357 / Et1/99).